Reading from the N-terminus, the 207-residue chain is Partner of Y14 and mago (207 aa).

Disordered stretches follow at residues 1-28 (MSTY…KARR) and 52-133 (QRQA…NSIS). A coiled-coil region spans residues 64-91 (LLAAESKKEREKQERTRAKKQEKESGRQ). Residues 68–90 (ESKKEREKQERTRAKKQEKESGR) show a composition bias toward basic and acidic residues. Over residues 123-133 (PSGSRDINSIS) the composition is skewed to polar residues. The stretch at 152-184 (AKQLKKLRKKIREIEQIESRIQAGEQKKLDKDQ) forms a coiled coil.

This sequence belongs to the pym family. In terms of assembly, interacts (via N-terminus) with mago and tsu/RBM8A; the interaction is direct. In terms of tissue distribution, expression detected in the ovary. In the oocyte expressed in the germarium, nurse cell and follicle cell.

Its subcellular location is the cytoplasm. The protein resides in the nucleus. In terms of biological role, regulator of the exon junction complex (EJC), a multiprotein complex that associates immediately upstream of the exon-exon junction on mRNAs and serves as a positional landmark for the intron exon structure of genes and directs post-transcriptional processes in the cytoplasm such as mRNA export, nonsense-mediated mRNA decay (NMD) or translation. Acts as an EJC disassembly factor by disrupting mature EJC from spliced mRNAs. Required for normal localization of osk mRNA to the posterior pole of the developing oocyte. Does not interact with the small ribosomal unit or components of the translation initiation complex. May not function in cap-dependent translation regulation. This chain is Partner of Y14 and mago, found in Drosophila melanogaster (Fruit fly).